Here is a 158-residue protein sequence, read N- to C-terminus: Low molecular weight phosphotyrosine protein phosphatase (158 aa).

N-acetylalanine is present on Ala2. Cys13 serves as the catalytic Nucleophile. Arg19 is an active-site residue. Asp130 serves as the catalytic Proton donor. 2 positions are modified to phosphotyrosine: Tyr132 and Tyr133.

The protein belongs to the low molecular weight phosphotyrosine protein phosphatase family.

It localises to the cytoplasm. It catalyses the reaction O-phospho-L-tyrosyl-[protein] + H2O = L-tyrosyl-[protein] + phosphate. It carries out the reaction a phosphate monoester + H2O = an alcohol + phosphate. Functionally, acts on tyrosine phosphorylated proteins, low-MW aryl phosphates and natural and synthetic acyl phosphates. The chain is Low molecular weight phosphotyrosine protein phosphatase (ACP1) from Gallus gallus (Chicken).